We begin with the raw amino-acid sequence, 142 residues long: HTH-type transcriptional regulator LrpA1 (142 aa).

In terms of domain architecture, HTH asnC-type spans 1–72 (MSTESTEERI…GQSIAMVGID (72 aa)). The segment at residues 22-41 (YAAIAERADVSKPTVRKYID) is a DNA-binding region (H-T-H motif).

Functionally, transcription factor that regulates genes involved in amino acid metabolism. Represses the aspB3 gene, coding for an aspartate transaminase, in the presence of L-aspartate. Another target gene is the basal transcriptional regulator tfbB. Also binds its own promoter. The protein is HTH-type transcriptional regulator LrpA1 (lrpA1) of Halobacterium salinarum (strain ATCC 29341 / DSM 671 / R1).